A 745-amino-acid polypeptide reads, in one-letter code: Junction plakoglobin (745 aa).

Residue Met-1 is modified to N-acetylmethionine. Residue Thr-14 is glycosylated (O-linked (GlcNAc) threonine). Residues Ser-99 and Ser-125 each carry the phosphoserine modification. ARM repeat units lie at residues Asn-132 to Lys-171, Lys-172 to His-215, Arg-216 to Leu-255, Glu-258 to Tyr-297, Gly-298 to Cys-341, Pro-342 to Asp-381, Ala-383 to Cys-420, Ser-423 to Ser-464, Glu-470 to Leu-510, Pro-512 to Thr-551, Pro-574 to Gln-613, and Lys-615 to Arg-661. The interval Asn-132–Tyr-297 is interaction with DSC1 and DSG1. The residue at position 182 (Ser-182) is a Phosphoserine. Residues Pro-574 to Arg-661 form an interaction with DSC1 region. Phosphoserine is present on residues Ser-665 and Ser-730.

The protein belongs to the beta-catenin family. Homodimer. Component of an E-cadherin/catenin adhesion complex composed of at least E-cadherin/CDH1 and gamma-catenin/JUP, and possibly alpha-catenin/CTNNA1; the complex is located to adherens junctions. The stable association of CTNNA1 is controversial as CTNNA1 was shown not to bind to F-actin when assembled in the complex. Interacts with MUC1. Interacts with CAV1. Interacts with PTPRJ. Interacts with DSG1. Interacts with DSC1 and DSC2. Interacts with PKP2. Interacts with PKP3 (via N-terminus); the interaction is required for PKP3 localization to desmosome cell-cell junctions. Interacts with DSG4. Post-translationally, may be phosphorylated by FER. As to expression, expressed in the heart (at protein level).

Its subcellular location is the cell junction. The protein localises to the adherens junction. It is found in the desmosome. It localises to the cytoplasm. The protein resides in the cytoskeleton. Its subcellular location is the cell membrane. The protein localises to the nucleus. In terms of biological role, common junctional plaque protein. The membrane-associated plaques are architectural elements in an important strategic position to influence the arrangement and function of both the cytoskeleton and the cells within the tissue. The presence of plakoglobin in both the desmosomes and in the intermediate junctions suggests that it plays a central role in the structure and function of submembranous plaques. Acts as a substrate for VE-PTP and is required by it to stimulate VE-cadherin function in endothelial cells. Can replace beta-catenin in E-cadherin/catenin adhesion complexes which are proposed to couple cadherins to the actin cytoskeleton. The sequence is that of Junction plakoglobin from Homo sapiens (Human).